A 224-amino-acid chain; its full sequence is UPF0758 protein AHA_0160 (224 aa).

The 123-residue stretch at 102-224 (PLTSPQLTRD…TVSFAERGWL (123 aa)) folds into the MPN domain. Residues H173, H175, and D186 each contribute to the Zn(2+) site. A JAMM motif motif is present at residues 173 to 186 (HNHPSGVAEPSRAD).

It belongs to the UPF0758 family.

The polypeptide is UPF0758 protein AHA_0160 (Aeromonas hydrophila subsp. hydrophila (strain ATCC 7966 / DSM 30187 / BCRC 13018 / CCUG 14551 / JCM 1027 / KCTC 2358 / NCIMB 9240 / NCTC 8049)).